The chain runs to 123 residues: Large ribosomal subunit protein bL12 (123 aa).

It belongs to the bacterial ribosomal protein bL12 family. In terms of assembly, homodimer. Part of the ribosomal stalk of the 50S ribosomal subunit. Forms a multimeric L10(L12)X complex, where L10 forms an elongated spine to which 2 to 4 L12 dimers bind in a sequential fashion. Binds GTP-bound translation factors.

Its function is as follows. Forms part of the ribosomal stalk which helps the ribosome interact with GTP-bound translation factors. Is thus essential for accurate translation. The sequence is that of Large ribosomal subunit protein bL12 from Pseudoalteromonas atlantica (strain T6c / ATCC BAA-1087).